We begin with the raw amino-acid sequence, 194 residues long: ATP-dependent Clp protease proteolytic subunit (194 aa).

Serine 97 (nucleophile) is an active-site residue. Histidine 122 is a catalytic residue.

It belongs to the peptidase S14 family. Fourteen ClpP subunits assemble into 2 heptameric rings which stack back to back to give a disk-like structure with a central cavity, resembling the structure of eukaryotic proteasomes.

It localises to the cytoplasm. The enzyme catalyses Hydrolysis of proteins to small peptides in the presence of ATP and magnesium. alpha-casein is the usual test substrate. In the absence of ATP, only oligopeptides shorter than five residues are hydrolyzed (such as succinyl-Leu-Tyr-|-NHMec, and Leu-Tyr-Leu-|-Tyr-Trp, in which cleavage of the -Tyr-|-Leu- and -Tyr-|-Trp bonds also occurs).. Its function is as follows. Cleaves peptides in various proteins in a process that requires ATP hydrolysis. Has a chymotrypsin-like activity. Plays a major role in the degradation of misfolded proteins. This chain is ATP-dependent Clp protease proteolytic subunit, found in Thermus thermophilus (strain ATCC BAA-163 / DSM 7039 / HB27).